Reading from the N-terminus, the 398-residue chain is Phosphoglycerate kinase (398 aa).

Residues 21 to 23 (DFN), Arg36, 59 to 62 (HLGR), Arg119, and Arg157 contribute to the substrate site. ATP is bound by residues Lys208, Gly296, Glu327, and 354–357 (GGDS).

It belongs to the phosphoglycerate kinase family. Monomer.

Its subcellular location is the cytoplasm. The enzyme catalyses (2R)-3-phosphoglycerate + ATP = (2R)-3-phospho-glyceroyl phosphate + ADP. It participates in carbohydrate degradation; glycolysis; pyruvate from D-glyceraldehyde 3-phosphate: step 2/5. In Lactococcus lactis subsp. lactis (strain IL1403) (Streptococcus lactis), this protein is Phosphoglycerate kinase (pgk).